Here is a 349-residue protein sequence, read N- to C-terminus: uncharacterized protein (349 aa).

A helical membrane pass occupies residues 17–37 (VIAIVSTGLVFAMTLVLTGLV). Residues 111-131 (FGAPEHGPGMPRVSDGRAPST) form a disordered region. 3 helical membrane passes run 230–250 (AITV…GSVV), 284–304 (VVAL…APLF), and 308–328 (VVVP…IGLL).

It belongs to the ABC-4 integral membrane protein family.

The protein localises to the cell membrane. This is an uncharacterized protein from Mycobacterium bovis (strain ATCC BAA-935 / AF2122/97).